The sequence spans 282 residues: Shikimate dehydrogenase (NADP(+)) (282 aa).

Shikimate is bound by residues 18–20 (SRS) and Thr65. Lys69 functions as the Proton acceptor in the catalytic mechanism. 2 residues coordinate shikimate: Asn90 and Asp106. Residues 134–138 (GAGGA), 158–163 (NRTAAR), and Ile223 contribute to the NADP(+) site. Residue Tyr225 participates in shikimate binding. An NADP(+)-binding site is contributed by Gly246.

Belongs to the shikimate dehydrogenase family. In terms of assembly, homodimer.

It catalyses the reaction shikimate + NADP(+) = 3-dehydroshikimate + NADPH + H(+). It participates in metabolic intermediate biosynthesis; chorismate biosynthesis; chorismate from D-erythrose 4-phosphate and phosphoenolpyruvate: step 4/7. In terms of biological role, involved in the biosynthesis of the chorismate, which leads to the biosynthesis of aromatic amino acids. Catalyzes the reversible NADPH linked reduction of 3-dehydroshikimate (DHSA) to yield shikimate (SA). This Methylobacterium radiotolerans (strain ATCC 27329 / DSM 1819 / JCM 2831 / NBRC 15690 / NCIMB 10815 / 0-1) protein is Shikimate dehydrogenase (NADP(+)).